Consider the following 144-residue polypeptide: Large ribosomal subunit protein uL11m (144 aa).

The transit peptide at Met-1–Gly-32 directs the protein to the mitochondrion.

The protein belongs to the universal ribosomal protein uL11 family. Component of the mitochondrial large ribosomal subunit (mt-LSU). Mature yeast 74S mitochondrial ribosomes consist of a small (37S) and a large (54S) subunit. The 37S small subunit contains a 15S ribosomal RNA (15S mt-rRNA) and at least 32 different proteins. The 54S large subunit contains a 21S rRNA (21S mt-rRNA) and at least 45 different proteins.

The protein resides in the mitochondrion. The protein localises to the cytoplasm. Its function is as follows. Component of the mitochondrial ribosome (mitoribosome), a dedicated translation machinery responsible for the synthesis of mitochondrial genome-encoded proteins, including at least some of the essential transmembrane subunits of the mitochondrial respiratory chain. The mitoribosomes are attached to the mitochondrial inner membrane and translation products are cotranslationally integrated into the membrane. The protein is Large ribosomal subunit protein uL11m of Schizosaccharomyces pombe (strain 972 / ATCC 24843) (Fission yeast).